Consider the following 568-residue polypeptide: MKWKEKLGDGVYDTFMMIDETKCPPCSNVLCNPSEPPPPRRLNMTTEKFIRDHTQHFLDGGEMKVEQLFQEFGNRKSNTVQSDGISDSEKCSPTVSQGKSSDCLNTVKSNSSSKAPKVVPLTPEQALKQYKHHLTAYEKLEIINYPEIYFVGPNAKKRHGVIGGPNNGGYDDADGAYIHVPRDHLAYRYEVLKIIGKGSFGQVARVYDHKLRQYVALKMVRNEKRFHRQAAEEIRILEHLKKQDKTGSMNVIHMLESFTFRNHVCMAFELLSIDLYELIKKNKFQGFSVQLVRKFAQSILQSLDALHKNKIIHCDLKPENILLKHHGRSSTKVIDFGSSCFEYQKLYTYIQSRFYRAPEIILGSRYSTPIDIWSFGCILAELLTGQPLFPGEDEGDQLACMMELLGMPPPKLLEQSKRAKYFINSKGIPRYCSVTTQADGRVVLVGGRSRRGKKRGPPGSKDWGTALKGCDDYLFIEFLKRCLHWDPSARLTPAQALRHPWISKSVPRPLTTIDKVSGKRIVNPASAFQGLGSKLPPVVGIANKLKANLMSETNGSIPLCSVLPKLIS.

Residues 1–168 (MKWKEKLGDG…HGVIGGPNNG (168 aa)) form a disordered region. A compositionally biased stretch (polar residues) spans 77–114 (SNTVQSDGISDSEKCSPTVSQGKSSDCLNTVKSNSSSK). In terms of domain architecture, Protein kinase spans 189 to 502 (YEVLKIIGKG…PAQALRHPWI (314 aa)). ATP is bound by residues 195 to 203 (IGKGSFGQV) and K218. The Proton acceptor role is filled by D315. S330 carries the post-translational modification Phosphoserine. Phosphotyrosine is present on Y349. The Nuclear localization signal motif lies at 448 to 461 (RSRRGKKRGPPGSK).

This sequence belongs to the protein kinase superfamily. CMGC Ser/Thr protein kinase family. MNB/DYRK subfamily. In terms of assembly, interacts with SIRT1. Mg(2+) serves as cofactor. Post-translationally, protein kinase activity is activated following autophosphorylation at Tyr-349. Autophosphorylation at Ser-330 stabilizes the protein and enhances the protein kinase activity. In terms of processing, ubiquitinated at anaphase by the anaphase-promoting complex (APC/C), leading to its degradation by the proteasome.

It is found in the nucleus. It localises to the cytoplasm. The protein localises to the nucleus speckle. Its subcellular location is the cytoplasmic granule. The protein resides in the cytoskeleton. It is found in the microtubule organizing center. It localises to the centrosome. It catalyses the reaction L-seryl-[protein] + ATP = O-phospho-L-seryl-[protein] + ADP + H(+). The catalysed reaction is L-threonyl-[protein] + ATP = O-phospho-L-threonyl-[protein] + ADP + H(+). The enzyme catalyses L-tyrosyl-[protein] + ATP = O-phospho-L-tyrosyl-[protein] + ADP + H(+). Protein kinase activity is activated following autophosphorylation at Tyr-349. Its function is as follows. Dual-specificity protein kinase that promotes disassembly of several types of membraneless organelles during mitosis, such as stress granules, nuclear speckles and pericentriolar material. Dual-specificity tyrosine-regulated kinases (DYRKs) autophosphorylate a critical tyrosine residue in their activation loop and phosphorylate their substrate on serine and threonine residues. Acts as a central dissolvase of membraneless organelles during the G2-to-M transition, after the nuclear-envelope breakdown: acts by mediating phosphorylation of multiple serine and threonine residues in unstructured domains of proteins, such as SRRM1 and PCM1. Does not mediate disassembly of all membraneless organelles: disassembly of P-body and nucleolus is not regulated by DYRK3. Dissolution of membraneless organelles at the onset of mitosis is also required to release mitotic regulators, such as ZNF207, from liquid-unmixed organelles where they are sequestered and keep them dissolved during mitosis. Regulates mTORC1 by mediating the dissolution of stress granules: during stressful conditions, DYRK3 partitions from the cytosol to the stress granule, together with mTORC1 components, which prevents mTORC1 signaling. When stress signals are gone, the kinase activity of DYRK3 is required for the dissolution of stress granule and mTORC1 relocation to the cytosol: acts by mediating the phosphorylation of the mTORC1 inhibitor AKT1S1, allowing full reactivation of mTORC1 signaling. Also acts as a negative regulator of EPO-dependent erythropoiesis: may place an upper limit on red cell production during stress erythropoiesis. Inhibits cell death due to cytokine withdrawal in hematopoietic progenitor cells. Promotes cell survival upon genotoxic stress through phosphorylation of SIRT1: this in turn inhibits p53/TP53 activity and apoptosis. The polypeptide is Dual specificity tyrosine-phosphorylation-regulated kinase 3 (Macaca fascicularis (Crab-eating macaque)).